The sequence spans 229 residues: Large ribosomal subunit protein uL1 (229 aa).

It belongs to the universal ribosomal protein uL1 family. In terms of assembly, part of the 50S ribosomal subunit.

Functionally, binds directly to 23S rRNA. The L1 stalk is quite mobile in the ribosome, and is involved in E site tRNA release. Its function is as follows. Protein L1 is also a translational repressor protein, it controls the translation of the L11 operon by binding to its mRNA. The chain is Large ribosomal subunit protein uL1 from Clostridium beijerinckii (strain ATCC 51743 / NCIMB 8052) (Clostridium acetobutylicum).